The chain runs to 312 residues: Ribosomal RNA small subunit methyltransferase H (312 aa).

S-adenosyl-L-methionine is bound by residues 32–34, aspartate 52, phenylalanine 79, aspartate 100, and glutamine 107; that span reads AGH.

It belongs to the methyltransferase superfamily. RsmH family.

Its subcellular location is the cytoplasm. It carries out the reaction cytidine(1402) in 16S rRNA + S-adenosyl-L-methionine = N(4)-methylcytidine(1402) in 16S rRNA + S-adenosyl-L-homocysteine + H(+). Functionally, specifically methylates the N4 position of cytidine in position 1402 (C1402) of 16S rRNA. This chain is Ribosomal RNA small subunit methyltransferase H, found in Listeria monocytogenes serovar 1/2a (strain ATCC BAA-679 / EGD-e).